A 343-amino-acid chain; its full sequence is ELAV-like protein 3 (343 aa).

3 RRM domains span residues 35–113 (TNLI…YARP), 121–202 (ANLY…FANN), and 260–338 (WCIF…FKTS).

This sequence belongs to the RRM elav family.

In terms of biological role, RNA-binding protein that binds to AU-rich sequences (AREs) of target mRNAs. May also bind poly-A tracts via RRM 3. May be involved in neuronal differentiation and maintenance. The sequence is that of ELAV-like protein 3 from Xenopus tropicalis (Western clawed frog).